Here is a 938-residue protein sequence, read N- to C-terminus: Breast cancer type 2 susceptibility protein homolog (938 aa).

2 stretches are compositionally biased toward basic and acidic residues: residues 320-339 (LEPS…ESKI) and 409-425 (NSIK…ETPN). 2 disordered regions span residues 320–359 (LEPS…TTVL) and 409–434 (NSIK…SSHQ). BRCA2 repeat units follow at residues 537–571 (AEPE…EFQY), 638–672 (NEPQ…QSRA), and 713–747 (SETE…EFQA). A compositionally biased stretch (polar residues) spans 870 to 879 (SSTETSTSCA). Residues 870–938 (SSTETSTSCA…RRLGLSRSRY (69 aa)) are disordered. Over residues 898–915 (ADRDLNRSKDCAKNRQDA) the composition is skewed to basic and acidic residues. Over residues 926 to 938 (KKSRRLGLSRSRY) the composition is skewed to basic residues.

As to quaternary structure, interacts with Rad9 and spn-A/Rad51.

It localises to the nucleus. Its function is as follows. Involved in and required for double-strand break repair by meiotic and mitotic homologous recombination. During meiosis, has a dual role in the repair of meiotic double-stranded breaks and the efficient activation of the meiotic recombination checkpoint. The chain is Breast cancer type 2 susceptibility protein homolog from Drosophila sechellia (Fruit fly).